A 157-amino-acid polypeptide reads, in one-letter code: Phosphopantetheine adenylyltransferase (157 aa).

A substrate-binding site is contributed by S9. Residues 9-10 (SF) and H17 each bind ATP. Substrate-binding residues include K41, T73, and R87. ATP-binding positions include 88 to 90 (GIR), E98, and 122 to 128 (YQDISSS).

This sequence belongs to the bacterial CoaD family. Homohexamer. Requires Mg(2+) as cofactor.

It localises to the cytoplasm. The catalysed reaction is (R)-4'-phosphopantetheine + ATP + H(+) = 3'-dephospho-CoA + diphosphate. It functions in the pathway cofactor biosynthesis; coenzyme A biosynthesis; CoA from (R)-pantothenate: step 4/5. In terms of biological role, reversibly transfers an adenylyl group from ATP to 4'-phosphopantetheine, yielding dephospho-CoA (dPCoA) and pyrophosphate. This is Phosphopantetheine adenylyltransferase from Oenococcus oeni (strain ATCC BAA-331 / PSU-1).